The following is a 67-amino-acid chain: uncharacterized protein (67 aa).

The next 2 membrane-spanning stretches (helical) occupy residues 13–32 (IACL…GFIV) and 42–64 (RLTN…TLGL).

The protein localises to the membrane. This is an uncharacterized protein from Saccharomyces cerevisiae (strain ATCC 204508 / S288c) (Baker's yeast).